The chain runs to 184 residues: Ribosome-recycling factor (184 aa).

Belongs to the RRF family.

Its subcellular location is the cytoplasm. In terms of biological role, responsible for the release of ribosomes from messenger RNA at the termination of protein biosynthesis. May increase the efficiency of translation by recycling ribosomes from one round of translation to another. The polypeptide is Ribosome-recycling factor (Lachnoclostridium phytofermentans (strain ATCC 700394 / DSM 18823 / ISDg) (Clostridium phytofermentans)).